Reading from the N-terminus, the 744-residue chain is Elongation factor G, mitochondrial (744 aa).

The N-terminal 25 residues, 1–25, are a transit peptide targeting the mitochondrion; that stretch reads MTISCLLRIRPALAKSFFENGQRAF. Residues 38 to 315 enclose the tr-type G domain; that stretch reads ERIRNIGISA…AVLDYLPNPG (278 aa). Residues 47–54, 114–118, and 168–171 contribute to the GTP site; these read AHIDSGKT, DTPGH, and NKLD.

Belongs to the TRAFAC class translation factor GTPase superfamily. Classic translation factor GTPase family. EF-G/EF-2 subfamily.

It localises to the mitochondrion. The protein operates within protein biosynthesis; polypeptide chain elongation. In terms of biological role, mitochondrial GTPase that catalyzes the GTP-dependent ribosomal translocation step during translation elongation. During this step, the ribosome changes from the pre-translocational (PRE) to the post-translocational (POST) state as the newly formed A-site-bound peptidyl-tRNA and P-site-bound deacylated tRNA move to the P and E sites, respectively. Catalyzes the coordinated movement of the two tRNA molecules, the mRNA and conformational changes in the ribosome. The chain is Elongation factor G, mitochondrial from Culex quinquefasciatus (Southern house mosquito).